Consider the following 171-residue polypeptide: 3-hydroxydecanoyl-[acyl-carrier-protein] dehydratase (171 aa).

His70 is a catalytic residue.

The protein belongs to the thioester dehydratase family. FabA subfamily. As to quaternary structure, homodimer.

It is found in the cytoplasm. It carries out the reaction a (3R)-hydroxyacyl-[ACP] = a (2E)-enoyl-[ACP] + H2O. The catalysed reaction is (3R)-hydroxydecanoyl-[ACP] = (2E)-decenoyl-[ACP] + H2O. It catalyses the reaction (2E)-decenoyl-[ACP] = (3Z)-decenoyl-[ACP]. The protein operates within lipid metabolism; fatty acid biosynthesis. Necessary for the introduction of cis unsaturation into fatty acids. Catalyzes the dehydration of (3R)-3-hydroxydecanoyl-ACP to E-(2)-decenoyl-ACP and then its isomerization to Z-(3)-decenoyl-ACP. Can catalyze the dehydratase reaction for beta-hydroxyacyl-ACPs with saturated chain lengths up to 16:0, being most active on intermediate chain length. This Shewanella halifaxensis (strain HAW-EB4) protein is 3-hydroxydecanoyl-[acyl-carrier-protein] dehydratase.